The sequence spans 949 residues: MKTDLLASRHIGINEEDTAVMLRKIGVDSLDELINKTIPANIRLKEPLALAKPLTEYEFGKHIADLASKNKLYTTYIGLGWYNTITPAVIQRNVFENPVWYTSYTPYQTEVSQGRLEALMNFQTAVCDLTAMPLANCSLLDEATAAAEAVTMMYALRSRTQQKAGANVVFVDENIFPQTLAVMTTRAIPQGIELRVGKYKEFEPSPEIFACILQYPNSSGNVEDYADFTKKAHEADCKVAVAADILSLALLTPPGEWGADIVFGTTQRLGTPMFYGGPSAGYFATRDEYKRNMPGRIIGWSKDKYGKLCYRMALQTREQHIKREKATSNICTAQALLATMAGFYAVYHGQEGIKTIASRIHSITVFLDKQLKKFGYTQVNAQYFDTLRFELPEHVSAQQIRTIALSKEVNLRYYENGDVGFSIDETTDIAATNVLLSIFAIAAGKDYQKVEDVPEKSNIDKALKRTTPFLTHEVFSNYHTETEMMRYIKRLDRKDISLAQSMISLGSCTMKLNAAAEMLPLSRPEFMSMHPLVPEDQAEGYRELISNLSEDLKVITGFAGVSLQPNSGAAGEYAGLRVIRAYLESIGQGHRNKILIPASAHGTNPASAIQAGFETVTCACDEQGNVDMGDLRAKAEENKEALAALMITYPSTHGIFETEIKEICEIIHACGAQVYMDGANMNAQVGLTNPGFIGADVCHLNLHKTFASPHGGGGPGVGPICVAEHLVPFLPGHSIFGSTQNQVSAAPFGSAGILPITYGYIRMMGTEGLTQATKIAILNANYLAACLKDTYGIVYRGATGFVGHEMILECRKVHEETGISENDIAKRLMDYGYHAPTLSFPVHGTLMIEPTESESLAELDNFVDVMLNIWKEIQEVKNEEADKNDNVLINAPHPEYEIVNDNWEHSYTREKAAYPIESVRENKFWVNVARVDNTLGDRKLLPTRYGTFE.

Lys704 is subject to N6-(pyridoxal phosphate)lysine.

Belongs to the GcvP family. In terms of assembly, the glycine cleavage system is composed of four proteins: P, T, L and H. Requires pyridoxal 5'-phosphate as cofactor.

The enzyme catalyses N(6)-[(R)-lipoyl]-L-lysyl-[glycine-cleavage complex H protein] + glycine + H(+) = N(6)-[(R)-S(8)-aminomethyldihydrolipoyl]-L-lysyl-[glycine-cleavage complex H protein] + CO2. The glycine cleavage system catalyzes the degradation of glycine. The P protein binds the alpha-amino group of glycine through its pyridoxal phosphate cofactor; CO(2) is released and the remaining methylamine moiety is then transferred to the lipoamide cofactor of the H protein. This chain is Glycine dehydrogenase (decarboxylating), found in Bacteroides thetaiotaomicron (strain ATCC 29148 / DSM 2079 / JCM 5827 / CCUG 10774 / NCTC 10582 / VPI-5482 / E50).